Consider the following 445-residue polypeptide: 6-phosphogluconate dehydrogenase, decarboxylating (445 aa).

NADP(+)-binding positions include 1-4 (AVMG), 22-24 (NRS), 63-65 (VKA), and Asn-91. Substrate is bound by residues Asn-91 and 117–119 (SGG). Lys-172 (proton acceptor) is an active-site residue. 175–176 (HN) provides a ligand contact to substrate. The active-site Proton donor is Glu-179. Tyr-180, Lys-249, Arg-276, Arg-434, and His-440 together coordinate substrate.

This sequence belongs to the 6-phosphogluconate dehydrogenase family. In terms of assembly, homodimer.

The enzyme catalyses 6-phospho-D-gluconate + NADP(+) = D-ribulose 5-phosphate + CO2 + NADPH. It functions in the pathway carbohydrate degradation; pentose phosphate pathway; D-ribulose 5-phosphate from D-glucose 6-phosphate (oxidative stage): step 3/3. In terms of biological role, catalyzes the oxidative decarboxylation of 6-phosphogluconate to ribulose 5-phosphate and CO(2), with concomitant reduction of NADP to NADPH. In Shigella boydii, this protein is 6-phosphogluconate dehydrogenase, decarboxylating (gnd).